The primary structure comprises 187 residues: Holliday junction resolvase (187 aa).

It belongs to the RuvC family. Poxviruses-type subfamily. The cofactor is Mg(2+). Acylated by palmitic acid group(s).

It localises to the membrane. Functionally, nuclease that specifically cleaves and resolves four-way DNA Holliday junctions into linear duplex products. The protein is Holliday junction resolvase of Vaccinia virus (strain Ankara) (VACV).